We begin with the raw amino-acid sequence, 282 residues long: Parvulin-like PPIase (282 aa).

Positions 1 to 20 (MKKLSVIFLSVSMLSSIAFG) are cleaved as a signal peptide. The PpiC domain occupies 138 to 231 (KEQIKVAHIL…FGWHIIKVLE (94 aa)).

This sequence belongs to the PpiC/parvulin rotamase family.

The protein resides in the cell outer membrane. The catalysed reaction is [protein]-peptidylproline (omega=180) = [protein]-peptidylproline (omega=0). The chain is Parvulin-like PPIase (plp) from Rickettsia prowazekii (strain Madrid E).